Reading from the N-terminus, the 196-residue chain is Mitochondrial inner membrane protein SHH3 (196 aa).

Residues methionine 1 to lysine 53 constitute a mitochondrion transit peptide. Residues serine 54–serine 97 lie on the Mitochondrial matrix side of the membrane. Residues serine 91 and arginine 95 each contribute to the a ubiquinone site. Residues glycine 98–methionine 118 form a helical membrane-spanning segment. Residues glycine 119 to lysine 137 are Mitochondrial intermembrane-facing. A helical membrane pass occupies residues tryptophan 138 to arginine 160. Heme is bound at residue histidine 154. Residues histidine 161 to glycine 174 are Mitochondrial matrix-facing. A helical membrane pass occupies residues valine 175–alanine 195. Position 196 (glutamine 196) is a topological domain, mitochondrial intermembrane.

It belongs to the cytochrome b560 family.

It is found in the mitochondrion inner membrane. Functionally, homolog of SDH3, but seems not to be a stoichiometric subunit of either the succinate dehydrogenase (SDH) complex or the mitochondrial inner membrane translocase TIM22 complex. The sequence is that of Mitochondrial inner membrane protein SHH3 from Saccharomyces cerevisiae (strain ATCC 204508 / S288c) (Baker's yeast).